A 365-amino-acid chain; its full sequence is UDP-N-acetylglucosamine--N-acetylmuramyl-(pentapeptide) pyrophosphoryl-undecaprenol N-acetylglucosamine transferase (365 aa).

UDP-N-acetyl-alpha-D-glucosamine contacts are provided by residues 10-12 (TGG), Asn-128, Arg-170, Ser-199, Ile-250, and Gln-295.

Belongs to the glycosyltransferase 28 family. MurG subfamily.

The protein localises to the cell inner membrane. The enzyme catalyses di-trans,octa-cis-undecaprenyl diphospho-N-acetyl-alpha-D-muramoyl-L-alanyl-D-glutamyl-meso-2,6-diaminopimeloyl-D-alanyl-D-alanine + UDP-N-acetyl-alpha-D-glucosamine = di-trans,octa-cis-undecaprenyl diphospho-[N-acetyl-alpha-D-glucosaminyl-(1-&gt;4)]-N-acetyl-alpha-D-muramoyl-L-alanyl-D-glutamyl-meso-2,6-diaminopimeloyl-D-alanyl-D-alanine + UDP + H(+). It participates in cell wall biogenesis; peptidoglycan biosynthesis. Functionally, cell wall formation. Catalyzes the transfer of a GlcNAc subunit on undecaprenyl-pyrophosphoryl-MurNAc-pentapeptide (lipid intermediate I) to form undecaprenyl-pyrophosphoryl-MurNAc-(pentapeptide)GlcNAc (lipid intermediate II). The chain is UDP-N-acetylglucosamine--N-acetylmuramyl-(pentapeptide) pyrophosphoryl-undecaprenol N-acetylglucosamine transferase from Chlorobium luteolum (strain DSM 273 / BCRC 81028 / 2530) (Pelodictyon luteolum).